The chain runs to 274 residues: Nickel/cobalt efflux system RcnA (274 aa).

Residues 1–12 (MTEFTTLLQQGN) lie on the Periplasmic side of the membrane. A helical membrane pass occupies residues 13 to 33 (AWFFIPSAILLGALHGLEPGH). The Cytoplasmic portion of the chain corresponds to 34-56 (SKTMMAAFIIAIKGTIKQAVMLG). Residues 57–77 (LAATISHTAVVWLIAFGGMVI) traverse the membrane as a helical segment. Residues 78-86 (SKRFTAQSA) lie on the Periplasmic side of the membrane. Residues 87 to 107 (EPWLQLISAVIIISTAFWMFW) form a helical membrane-spanning segment. Topologically, residues 108-174 (RTWRGERNWL…FDGREVTNWQ (67 aa)) are cytoplasmic. Residues 127–137 (HHHHDHEDHHD) are compositionally biased toward basic and acidic residues. The tract at residues 127 to 153 (HHHHDHEDHHDHGHHHHHEHGEYQDAH) is disordered. A helical transmembrane segment spans residues 175–195 (ILLFGLTGGLIPCPAAITVLL). Residues 196–209 (ICIQLKALTLGATL) are Periplasmic-facing. The chain crosses the membrane as a helical span at residues 210 to 230 (VVSFSLGLALTLVTVSVGAAI). Residues 231-251 (SVQQVAKRWSGFNTLAKRAPY) lie on the Cytoplasmic side of the membrane. The helical transmembrane segment at 252–272 (FSSLLIGLVGVYMGVHGFMGI) threads the bilayer. The Periplasmic segment spans residues 273 to 274 (MR).

Belongs to the NiCoT transporter (TC 2.A.52) family. RcnA subfamily.

The protein localises to the cell inner membrane. Efflux system for nickel and cobalt. The sequence is that of Nickel/cobalt efflux system RcnA (rcnA) from Escherichia coli O6:K15:H31 (strain 536 / UPEC).